A 239-amino-acid chain; its full sequence is Ribose-5-phosphate isomerase A (239 aa).

Residues 40 to 43 (SGST), 96 to 99 (DGAD), and 110 to 113 (KGGG) each bind substrate. The active-site Proton acceptor is the E119. Substrate is bound at residue K137.

Belongs to the ribose 5-phosphate isomerase family. Homodimer.

The catalysed reaction is aldehydo-D-ribose 5-phosphate = D-ribulose 5-phosphate. It participates in carbohydrate degradation; pentose phosphate pathway; D-ribose 5-phosphate from D-ribulose 5-phosphate (non-oxidative stage): step 1/1. Its function is as follows. Catalyzes the reversible conversion of ribose-5-phosphate to ribulose 5-phosphate. The polypeptide is Ribose-5-phosphate isomerase A (Methanococcus vannielii (strain ATCC 35089 / DSM 1224 / JCM 13029 / OCM 148 / SB)).